A 496-amino-acid chain; its full sequence is Cytochrome P450 71D179 (496 aa).

Residues 1 to 21 (MDISISWVVIIVSVLSYLILM) form a helical; Signal-anchor for type II membrane protein membrane-spanning segment. Cys435 is a binding site for heme.

The protein belongs to the cytochrome P450 family. The cofactor is heme.

Its subcellular location is the membrane. It functions in the pathway secondary metabolite biosynthesis; terpenoid biosynthesis. Its function is as follows. Involved in the biosynthesis of phenolic monoterpenes natural products thymol and carvacrol which have a broad range of biological activities acting as antimicrobial compounds, insecticides, antioxidants and pharmaceutical agents. Catalyzes probably the C3-hydroxylation of gamma-terpinene to produce thymol. This is Cytochrome P450 71D179 from Thymus vulgaris (Thyme).